A 268-amino-acid polypeptide reads, in one-letter code: Photosystem II 22 kDa protein 1, chloroplastic (268 aa).

The transit peptide at 1–60 (MAQSMLVSGANGTVAAASTSRLQPVRPTPFSRLVLSQPSSSLGRAVSVKTVALFGRSKTK) directs the protein to the chloroplast. A run of 2 repeats spans residues 54–161 (FGRS…FVDD) and 164–268 (VTGL…DDEE). The next 4 membrane-spanning stretches (helical) occupy residues 99 to 119 (VAML…KGIL), 133 to 153 (AEPL…GALG), 199 to 219 (LFVG…EIIT), and 234 to 254 (PINE…IAAI).

Belongs to the ELIP/psbS family. As to expression, expressed at low levels in leaves (at protein level).

The protein resides in the plastid. It localises to the chloroplast thylakoid membrane. In terms of biological role, involved in high light-mediated energy-dependent nonphotochemical quenching (NPQ, qE) and thermal dissipation (TD) thus regulating energy conversion in photosystem II and protecting from photoinhibition. Also seems to regulate quantum yield of electron transport in fluctuating light conditions. The sequence is that of Photosystem II 22 kDa protein 1, chloroplastic from Oryza sativa subsp. indica (Rice).